Consider the following 252-residue polypeptide: Large ribosomal subunit protein uL29m (252 aa).

Position 146 is an N6-acetyllysine (Lys-146).

It belongs to the universal ribosomal protein uL29 family. As to quaternary structure, component of the mitochondrial ribosome large subunit (39S) which comprises a 16S rRNA and about 50 distinct proteins.

It is found in the mitochondrion. In Bos taurus (Bovine), this protein is Large ribosomal subunit protein uL29m (MRPL47).